Reading from the N-terminus, the 143-residue chain is Peptide methionine sulfoxide reductase MsrB (143 aa).

The MsrB domain maps to 16 to 139 (DAELRRRLTP…NSAALNFESR (124 aa)). Zn(2+) contacts are provided by Cys55, Cys58, Cys104, and Cys107. The Nucleophile role is filled by Cys128.

The protein belongs to the MsrB Met sulfoxide reductase family. Requires Zn(2+) as cofactor.

It catalyses the reaction L-methionyl-[protein] + [thioredoxin]-disulfide + H2O = L-methionyl-(R)-S-oxide-[protein] + [thioredoxin]-dithiol. This is Peptide methionine sulfoxide reductase MsrB from Burkholderia vietnamiensis (strain G4 / LMG 22486) (Burkholderia cepacia (strain R1808)).